Here is a 269-residue protein sequence, read N- to C-terminus: Bis(5'-nucleosyl)-tetraphosphatase, symmetrical (269 aa).

Belongs to the Ap4A hydrolase family.

It catalyses the reaction P(1),P(4)-bis(5'-adenosyl) tetraphosphate + H2O = 2 ADP + 2 H(+). Functionally, hydrolyzes diadenosine 5',5'''-P1,P4-tetraphosphate to yield ADP. The sequence is that of Bis(5'-nucleosyl)-tetraphosphatase, symmetrical from Vibrio vulnificus (strain CMCP6).